The sequence spans 927 residues: 2-oxoadipate dehydrogenase complex component E1 (927 aa).

The protein belongs to the alpha-ketoglutarate dehydrogenase family. In terms of assembly, the 2-oxoadipate dehydrogenase complex is composed of OADH (2-oxoadipate dehydrogenase; E1a), DLST (dihydrolipoamide succinyltransferase; E2) and DLD (dihydrolipoamide dehydrogenase; E3). E1a functional unit is a dimer. Thiamine diphosphate serves as cofactor.

It is found in the mitochondrion. The enzyme catalyses N(6)-[(R)-lipoyl]-L-lysyl-[protein] + 2-oxoadipate + H(+) = N(6)-[(R)-S(8)-glutaryldihydrolipoyl]-L-lysyl-[protein] + CO2. Its pathway is amino-acid degradation. In terms of biological role, 2-oxoadipate dehydrogenase (E1a) component of the 2-oxoadipate dehydrogenase complex (OADHC). Participates in the first step, rate limiting for the overall conversion of 2-oxoadipate (alpha-ketoadipate) to glutaryl-CoA and CO(2) catalyzed by the whole OADHC. Catalyzes the irreversible decarboxylation of 2-oxoadipate via the thiamine diphosphate (ThDP) cofactor and subsequent transfer of the decarboxylated acyl intermediate on an oxidized dihydrolipoyl group that is covalently amidated to the E2 enzyme (dihydrolipoyllysine-residue succinyltransferase or DLST). Can catalyze the decarboxylation of 2-oxoglutarate in vitro, but at a much lower rate than 2-oxoadipate. Responsible for the last step of L-lysine, L-hydroxylysine and L-tryptophan catabolism with the common product being 2-oxoadipate. This chain is 2-oxoadipate dehydrogenase complex component E1 (dhtkd1), found in Xenopus laevis (African clawed frog).